A 129-amino-acid polypeptide reads, in one-letter code: Intraflagellar transport protein 20 homolog (129 aa).

Residues 89-121 adopt a coiled-coil conformation; that stretch reads VLLQMTIRELTVEKERLRVELEAVRKIEKEQDE.

Component of the IFT complex B composed of at least che-2, che-13, dyf-1, dyf-3, dyf-6, dyf-11, dyf-13, ift-20, ift-74, ift-81, ifta-2, osm-1, osm-5 and osm-6.

It is found in the cell projection. The protein localises to the cilium. Its function is as follows. Component of the intraflagellar transport (IFT) complex B required for transport of proteins in the motile cilium. Required for ciliary entrance and transport of specific ciliary cargo proteins such as che-3 which are related to motility. The chain is Intraflagellar transport protein 20 homolog from Caenorhabditis elegans.